Consider the following 496-residue polypeptide: Protein disulfide-isomerase (496 aa).

Positions 1-18 (MKFLICALFLAASYVAAS) are cleaved as a signal peptide. Thioredoxin domains follow at residues 19–134 (AEAE…KKTG) and 349–474 (GKLK…ANGE). Active-site nucleophile residues include C56, C59, C397, and C400. Cystine bridges form between C56/C59 and C397/C400. Residues 473 to 496 (GEVADSEPVEETEEEEEAPKKDEL) form a disordered region. The segment covering 476 to 489 (ADSEPVEETEEEEE) has biased composition (acidic residues). The Prevents secretion from ER signature appears at 493-496 (KDEL).

The protein belongs to the protein disulfide isomerase family. In terms of assembly, homodimer. In terms of tissue distribution, expressed in all head and body tissues.

The protein localises to the endoplasmic reticulum lumen. It carries out the reaction Catalyzes the rearrangement of -S-S- bonds in proteins.. Participates in the folding of proteins containing disulfide bonds. This Drosophila melanogaster (Fruit fly) protein is Protein disulfide-isomerase (Pdi).